Reading from the N-terminus, the 358-residue chain is Protein PXR1 (358 aa).

2 disordered regions span residues 1–26 and 146–342; these read MGLAAPKNRSKISNDPQNTTWANNTS and EVKT…KSAT. Positions 11–26 are enriched in polar residues; sequence KISNDPQNTTWANNTS. Residues 25 to 79 enclose the G-patch domain; that stretch reads TSRFGHRILTSQGWQPGDSLGASDAAHAAHYTVASQSHIRVLLKDDNLGLGAKRG. 2 stretches are compositionally biased toward basic and acidic residues: residues 146 to 171 and 199 to 217; these read EVKTETQAKVEVKSEPESDGAKEDDR and SMDLRDQAKKDIAAESSKD. Residues 218-227 show a composition bias toward basic residues; it reads KKGKKSKKDK. Residues 287 to 299 are compositionally biased toward acidic residues; it reads DVEDLSSESEDES. Positions 300–315 are enriched in polar residues; it reads TPSASRPATGTSTPTV. The segment covering 328-339 has biased composition (basic residues); that stretch reads HSVRQKWIRSKK.

Belongs to the PINX1 family.

It is found in the nucleus. The protein resides in the nucleolus. Functionally, involved in rRNA-processing at A0, A1 and A2 sites and negatively regulates telomerase. This chain is Protein PXR1 (PXR1), found in Phaeosphaeria nodorum (strain SN15 / ATCC MYA-4574 / FGSC 10173) (Glume blotch fungus).